Here is a 444-residue protein sequence, read N- to C-terminus: Lycopaoctaene synthase (444 aa).

NADP(+) is bound by residues Arg-48 and Arg-73. Positions 76, 79, and 80 each coordinate Mg(2+). NADP(+) is bound by residues Arg-215, Lys-315, and Arg-317. 2 consecutive transmembrane segments (helical) span residues 391–411 (TAMVLAGALLIAALAYFAYVY) and 415–435 (GTSLKALPLFGVVIILAIGLF).

This sequence belongs to the phytoene/squalene synthase family. Mg(2+) is required as a cofactor.

It localises to the membrane. The catalysed reaction is 2 (2E,6E)-farnesyl diphosphate + NADH + H(+) = squalene + 2 diphosphate + NAD(+). It carries out the reaction 2 (2E,6E)-farnesyl diphosphate + NADPH + H(+) = squalene + 2 diphosphate + NADP(+). It catalyses the reaction 2 (2E,6E,10E)-geranylgeranyl diphosphate + NADPH + H(+) = all-trans-lycopaoctaene + 2 diphosphate + NADP(+). Functionally, converts the C20 geranylgeranyl diphosphate (GGPP) to the C40 lycopaoctaene, the first committed intermediate in the production of lycopadiene. Converts farnesyl diphosphate (FPP) into squalene, a precursor for sterol biosynthesis in eukaryotes. Converts with low efficiency the C20 phytyl diphosphate (PPP) to the C40 lycopadiene in vitro. This reaction may not have biological significance in vivo. This Botryococcus braunii (Green alga) protein is Lycopaoctaene synthase.